The sequence spans 180 residues: Flavodoxin B (180 aa).

Residues 4 to 173 (IGLFFGSNTG…RVAAWLAQIA (170 aa)) form the Flavodoxin-like domain.

It belongs to the flavodoxin family. It depends on FMN as a cofactor.

Functionally, low-potential electron donor to a number of redox enzymes. NifF is the electron donor to nitrogenase. The protein is Flavodoxin B (nifF) of Azotobacter chroococcum mcd 1.